A 110-amino-acid polypeptide reads, in one-letter code: Urease subunit beta (110 aa).

The protein belongs to the urease beta subunit family. In terms of assembly, heterotrimer of UreA (gamma), UreB (beta) and UreC (alpha) subunits. Three heterotrimers associate to form the active enzyme.

The protein localises to the cytoplasm. The catalysed reaction is urea + 2 H2O + H(+) = hydrogencarbonate + 2 NH4(+). It participates in nitrogen metabolism; urea degradation; CO(2) and NH(3) from urea (urease route): step 1/1. This Pseudoalteromonas translucida (strain TAC 125) protein is Urease subunit beta.